A 99-amino-acid chain; its full sequence is MSAISRSEVEHLARLARIDMTDEELDRMAGQLDAVLDAVAQVASVVTDDVPATSHPVPLTNVTRPDVVRPGLTAEEALAGAPASEDGRFRVPQILGEEA.

The protein belongs to the GatC family. In terms of assembly, heterotrimer of A, B and C subunits.

It carries out the reaction L-glutamyl-tRNA(Gln) + L-glutamine + ATP + H2O = L-glutaminyl-tRNA(Gln) + L-glutamate + ADP + phosphate + H(+). It catalyses the reaction L-aspartyl-tRNA(Asn) + L-glutamine + ATP + H2O = L-asparaginyl-tRNA(Asn) + L-glutamate + ADP + phosphate + 2 H(+). Its function is as follows. Allows the formation of correctly charged Asn-tRNA(Asn) or Gln-tRNA(Gln) through the transamidation of misacylated Asp-tRNA(Asn) or Glu-tRNA(Gln) in organisms which lack either or both of asparaginyl-tRNA or glutaminyl-tRNA synthetases. The reaction takes place in the presence of glutamine and ATP through an activated phospho-Asp-tRNA(Asn) or phospho-Glu-tRNA(Gln). In Kineococcus radiotolerans (strain ATCC BAA-149 / DSM 14245 / SRS30216), this protein is Aspartyl/glutamyl-tRNA(Asn/Gln) amidotransferase subunit C.